We begin with the raw amino-acid sequence, 446 residues long: Transcription factor Sox-10 (446 aa).

Disordered regions lie at residues 1–60 (MSDD…SEDE), 153–191 (RLRM…AEGG), and 203–264 (HLDH…IDFG). The span at 36–48 (DDDDDDDEEEEEE) shows a compositional bias: acidic residues. K52 participates in a covalent cross-link: Glycyl lysine isopeptide (Lys-Gly) (interchain with G-Cter in SUMO). Residues 56–96 (DSEDERFPVCIREAVSQVLNGYDWTLVPMPVRVNGGSKSKP) are dimerization (DIM). The HMG box DNA-binding region spans 98–166 (VKRPMNAFMV…QHKKDHPDYK (69 aa)). Positions 153-167 (RLRMQHKKDHPDYKY) are enriched in basic and acidic residues. A compositionally biased stretch (polar residues) spans 213–226 (SDGNSEHSTGQSHG). Residues 217–303 (SEHSTGQSHG…NGHAGHPSHI (87 aa)) are transactivation domain (TAM). The span at 243–257 (SDGKRDGSHALREGG) shows a compositional bias: basic and acidic residues. Residues 337-446 (KAQVKTESSS…QPVYTTLSRP (110 aa)) form a transactivation domain (TAC) region. Residue K341 forms a Glycyl lysine isopeptide (Lys-Gly) (interchain with G-Cter in SUMO) linkage. The tract at residues 421–446 (SDPPSVAQSHSPTHWEQPVYTTLSRP) is disordered. Residues 426–446 (VAQSHSPTHWEQPVYTTLSRP) are compositionally biased toward polar residues.

As to quaternary structure, interacts with the sumoylation factors ube2i/ubc9 and sumo1. In terms of processing, sumoylated. In terms of tissue distribution, first expressed at stages 13/14 at the lateral edges of the neural plate, in the neural crest forming region. By stage 22, neural crest cells migrate in the cranial region and strong expression is seen in the crest cells that populate the branchial arches as well as those migrating in the frontonasal region. Also strongly expressed in the trunk neural crest. Expression in the otic vesicle begins around stage 25 and persists until at least stage 40. At stage 30, expression is down-regulated in the cranial neural crest of the pharyngeal arches but persists in the trunk neural crest, in the otic vesicle and in discrete domains adjacent to the hindbrain. At stage 40, expression is restricted to the otic vesicle, differentiated pigment cells, and in several cranial ganglia.

Its subcellular location is the cytoplasm. It localises to the nucleus. In terms of biological role, acts early in neural crest formation, functioning redundantly with the other group E Sox factors sox8 and sox9 to induce neural crest progenitors. Acts downstream of wnt-signaling at the neural plate border. Involved in the specification of neural crest progenitors fated to form the pigment cell lineage. This Xenopus laevis (African clawed frog) protein is Transcription factor Sox-10 (sox10).